Consider the following 745-residue polypeptide: Cellulose synthase 1 catalytic subunit [UDP-forming] (745 aa).

3 consecutive transmembrane segments (helical) span residues 29-49, 106-126, and 153-173; these read YVVG…TLSL, GILG…LFLS, and IFIP…LGAL. The catalytic subdomain A stretch occupies residues 147-240; it reads EWPTVDIFIP…HILILDCDHI (94 aa). Aspartate 189 is an active-site residue. Residues aspartate 236 and aspartate 238 each coordinate substrate. Positions 317–377 are catalytic subdomain B; the sequence is KAIEEIGGFA…GQRMRWARGM (61 aa). Aspartate 333 is a catalytic residue. 6 helical membrane passes run 407 to 427, 430 to 450, 468 to 488, 515 to 535, 547 to 567, and 649 to 669; these read FFFA…LFFS, IIAA…FHSI, VYET…MLFP, NIIF…ALIF, ALNC…ISVG, and AVFT…RFVF. Residues 572 to 670 form the PilZ domain; it reads QLRQSHRIEA…EAAVVRFVFG (99 aa). The segment covering 708 to 717 has biased composition (basic residues); sequence IAHSRPKKKP. The tract at residues 708 to 745 is disordered; sequence IAHSRPKKKPIALPVERREPTTSQGGQKQEGKISRAAS. Positions 736–745 are enriched in basic and acidic residues; the sequence is QEGKISRAAS.

This sequence belongs to the glycosyltransferase 2 family. Requires Mg(2+) as cofactor.

It localises to the cell inner membrane. The catalysed reaction is [(1-&gt;4)-beta-D-glucosyl](n) + UDP-alpha-D-glucose = [(1-&gt;4)-beta-D-glucosyl](n+1) + UDP + H(+). It functions in the pathway glycan metabolism; bacterial cellulose biosynthesis. With respect to regulation, activated by bis-(3'-5') cyclic diguanylic acid (c-di-GMP). Its function is as follows. Catalytic subunit of cellulose synthase. It polymerizes uridine 5'-diphosphate glucose to cellulose. The thick cellulosic mats generated by this enzyme probably provide a specialized protective environment to the bacterium. The chain is Cellulose synthase 1 catalytic subunit [UDP-forming] (bcsAI) from Komagataeibacter xylinus (Gluconacetobacter xylinus).